A 155-amino-acid chain; its full sequence is Ribosomal RNA large subunit methyltransferase H (155 aa).

Residues Leu-72, Gly-103, and 122-127 (LSPLTL) each bind S-adenosyl-L-methionine.

The protein belongs to the RNA methyltransferase RlmH family. In terms of assembly, homodimer.

Its subcellular location is the cytoplasm. The enzyme catalyses pseudouridine(1915) in 23S rRNA + S-adenosyl-L-methionine = N(3)-methylpseudouridine(1915) in 23S rRNA + S-adenosyl-L-homocysteine + H(+). Specifically methylates the pseudouridine at position 1915 (m3Psi1915) in 23S rRNA. In Aeromonas salmonicida (strain A449), this protein is Ribosomal RNA large subunit methyltransferase H.